Consider the following 276-residue polypeptide: Alpha N-terminal protein methyltransferase 1 (276 aa).

The segment at 1-57 is disordered; the sequence is MTTTLEEQLSDKLQMMDETTDKVQGSSKQKDDSSIAASSDAKTASPSSSDSSTKVAA. Positions 34–57 are enriched in low complexity; sequence SIAASSDAKTASPSSSDSSTKVAA. S-adenosyl-L-methionine is bound by residues Gly-114, Arg-119, 136–138, 167–168, and Gln-182; these read EQD and LQ.

It belongs to the methyltransferase superfamily. NTM1 family.

The enzyme catalyses N-terminal L-alanyl-L-prolyl-L-lysyl-[protein] + 3 S-adenosyl-L-methionine = N-terminal N,N,N-trimethyl-L-alanyl-L-prolyl-L-lysyl-[protein] + 3 S-adenosyl-L-homocysteine + 3 H(+). The catalysed reaction is N-terminal L-seryl-L-prolyl-L-lysyl-[protein] + 3 S-adenosyl-L-methionine = N-terminal N,N,N-trimethyl-L-seryl-L-prolyl-L-lysyl-[protein] + 3 S-adenosyl-L-homocysteine + 3 H(+). It carries out the reaction N-terminal L-prolyl-L-prolyl-L-lysyl-[protein] + 2 S-adenosyl-L-methionine = N-terminal N,N-dimethyl-L-prolyl-L-prolyl-L-lysyl-[protein] + 2 S-adenosyl-L-homocysteine + 2 H(+). Functionally, alpha-N-methyltransferase that methylates the N-terminus of target proteins containing the N-terminal motif [Ala/Pro/Ser]-Pro-Lys when the initiator Met is cleaved. Specifically catalyzes mono-, di- or tri-methylation of exposed alpha-amino group of Ala or Ser residue in the [Ala/Ser]-Pro-Lys motif and mono- or di-methylation of Pro in the Pro-Pro-Lys motif. This Drosophila melanogaster (Fruit fly) protein is Alpha N-terminal protein methyltransferase 1 (Ntmt).